Consider the following 180-residue polypeptide: NADH-quinone oxidoreductase subunit I (180 aa).

4Fe-4S ferredoxin-type domains follow at residues 50–80 and 90–119; these read LTRN…LQKS and KFFR…LMPD. [4Fe-4S] cluster is bound by residues cysteine 60, cysteine 63, cysteine 66, cysteine 70, cysteine 99, cysteine 102, cysteine 105, and cysteine 109.

This sequence belongs to the complex I 23 kDa subunit family. NDH-1 is composed of 13 different subunits. Subunits NuoA, H, J, K, L, M, N constitute the membrane sector of the complex. [4Fe-4S] cluster is required as a cofactor.

It localises to the cell membrane. It carries out the reaction a quinone + NADH + 5 H(+)(in) = a quinol + NAD(+) + 4 H(+)(out). NDH-1 shuttles electrons from NADH, via FMN and iron-sulfur (Fe-S) centers, to quinones in the respiratory chain. The immediate electron acceptor for the enzyme in this species is believed to be ubiquinone. Couples the redox reaction to proton translocation (for every two electrons transferred, four hydrogen ions are translocated across the cytoplasmic membrane), and thus conserves the redox energy in a proton gradient. The sequence is that of NADH-quinone oxidoreductase subunit I from Buchnera aphidicola subsp. Schizaphis graminum (strain Sg).